Consider the following 516-residue polypeptide: 3-ketoacyl-CoA synthase 4 (516 aa).

2 consecutive transmembrane segments (helical) span residues 48-68 (LISN…SVEA) and 87-107 (LVSI…YVMT). The FAE domain maps to 104 to 393 (YVMTRPRPVY…FFMTLVVKKL (290 aa)). Residues C248, H327, H411, H415, H444, and N448 contribute to the active site.

Belongs to the thiolase-like superfamily. Chalcone/stilbene synthases family. In terms of tissue distribution, expressed at low levels in siliques, flowers, leaves and stems.

It is found in the membrane. It catalyses the reaction a very-long-chain acyl-CoA + malonyl-CoA + H(+) = a very-long-chain 3-oxoacyl-CoA + CO2 + CoA. The protein operates within lipid metabolism; fatty acid biosynthesis. The polypeptide is 3-ketoacyl-CoA synthase 4 (Arabidopsis thaliana (Mouse-ear cress)).